We begin with the raw amino-acid sequence, 102 residues long: RxLR effector protein PexRD41 (102 aa).

The signal sequence occupies residues 1-21; sequence MRSIFYFALAFAALTCSNASA. Residues 39-53 carry the RxLR-dEER motif; the sequence is RSLRVAGQEAARGEE.

It belongs to the RxLR effector family. In terms of assembly, interacts with host KRBP1.

It localises to the secreted. The protein resides in the host cytoplasm. Its subcellular location is the host nucleus. The protein localises to the host nucleolus. Its function is as follows. Effector that enhances P.infestans colonization of host plant leaves. During the early stages of P.infestans infection, interacts with and stabilizes host potato K-homology (KH) RNA-binding protein KRBP1, leading to its accumulation. This Phytophthora infestans (strain T30-4) (Potato late blight agent) protein is RxLR effector protein PexRD41.